A 390-amino-acid chain; its full sequence is UPF0229 protein Cbei_0567 (390 aa).

The tract at residues 77-108 is disordered; that stretch reads SGVGNEKRGEKLGNGNKKLAKGNQGAGNEEGD. The segment covering 89–103 has biased composition (low complexity); that stretch reads GNGNKKLAKGNQGAG.

This sequence belongs to the UPF0229 family.

This Clostridium beijerinckii (strain ATCC 51743 / NCIMB 8052) (Clostridium acetobutylicum) protein is UPF0229 protein Cbei_0567.